Consider the following 144-residue polypeptide: Large ribosomal subunit protein uL15 (144 aa).

The disordered stretch occupies residues 1-57 (MKLNDLSPAPGSRREKHRPGRGIGSGLGKTGGRGHKGQTSRSGGSIAPGFEGGQQPL). A compositionally biased stretch (gly residues) spans 21–31 (RGIGSGLGKTG).

This sequence belongs to the universal ribosomal protein uL15 family. As to quaternary structure, part of the 50S ribosomal subunit.

Binds to the 23S rRNA. This is Large ribosomal subunit protein uL15 from Pseudomonas entomophila (strain L48).